A 372-amino-acid polypeptide reads, in one-letter code: NAD(P)H-quinone oxidoreductase subunit 1, chloroplastic (372 aa).

Transmembrane regions (helical) follow at residues Ile28 to Ile48, Pro65 to Leu85, Trp97 to Val117, Ile128 to Ile148, Ala166 to Met186, Phe254 to Val274, Gly312 to Leu332, and Phe352 to Leu372.

This sequence belongs to the complex I subunit 1 family. In terms of assembly, NDH is composed of at least 16 different subunits, 5 of which are encoded in the nucleus.

It is found in the plastid. Its subcellular location is the chloroplast thylakoid membrane. It carries out the reaction a plastoquinone + NADH + (n+1) H(+)(in) = a plastoquinol + NAD(+) + n H(+)(out). The catalysed reaction is a plastoquinone + NADPH + (n+1) H(+)(in) = a plastoquinol + NADP(+) + n H(+)(out). NDH shuttles electrons from NAD(P)H:plastoquinone, via FMN and iron-sulfur (Fe-S) centers, to quinones in the photosynthetic chain and possibly in a chloroplast respiratory chain. The immediate electron acceptor for the enzyme in this species is believed to be plastoquinone. Couples the redox reaction to proton translocation, and thus conserves the redox energy in a proton gradient. The chain is NAD(P)H-quinone oxidoreductase subunit 1, chloroplastic from Staurastrum punctulatum (Green alga).